A 270-amino-acid polypeptide reads, in one-letter code: Orotidine 5'-phosphate decarboxylase (270 aa).

Lys-95 acts as the Proton donor in catalysis.

It belongs to the OMP decarboxylase family. Type 2 subfamily.

The catalysed reaction is orotidine 5'-phosphate + H(+) = UMP + CO2. It functions in the pathway pyrimidine metabolism; UMP biosynthesis via de novo pathway; UMP from orotate: step 2/2. This chain is Orotidine 5'-phosphate decarboxylase, found in Dechloromonas aromatica (strain RCB).